The sequence spans 348 residues: uncharacterized protein (348 aa).

In terms of biological role, may be involved in apoptosis regulation. This is an uncharacterized protein from Mus musculus (Mouse).